The following is a 673-amino-acid chain: Pesticin receptor (673 aa).

Positions 1 to 22 (MKMTRLYPLALGGLLLPAIANA) are cleaved as a signal peptide. Positions 30–37 (STLVVTAS) match the TonB box motif. In terms of domain architecture, TBDR plug spans 41-155 (SRSASANNVS…QGGIINIVTQ (115 aa)). Positions 160-672 (TPRGYIEGGV…TVGINTRIDF (513 aa)) constitute a TBDR beta-barrel domain. The short motif at 657-673 (QVNMGRTVGINTRIDFF) is the TonB C-terminal box element.

Belongs to the TonB-dependent receptor family.

The protein resides in the cell outer membrane. Its function is as follows. Receptor for the bacteriocin pesticin and for the siderophore yersiniabactin. This Yersinia pestis protein is Pesticin receptor (fyuA).